The primary structure comprises 166 residues: Signal peptidase complex catalytic subunit SEC11 (166 aa).

The Cytoplasmic portion of the chain corresponds to M1 to Q9. A helical; Signal-anchor for type II membrane protein transmembrane segment spans residues F10–I30. The Lumenal segment spans residues T31–E166. Residues S44, H83, and D108 each act as charge relay system in the active site. The C-terminal short (CTS) helix stretch occupies residues G152–L163.

It belongs to the peptidase S26B family. As to quaternary structure, component of the signal peptidase complex (SPC) composed of a catalytic subunit SEC11 and three accessory subunits SPC1, SPC2 and SPC3. The complex induces a local thinning of the ER membrane which is used to measure the length of the signal peptide (SP) h-region of protein substrates. This ensures the selectivity of the complex towards h-regions shorter than 18-20 amino acids. SPC associates with the translocon complex.

The protein resides in the endoplasmic reticulum membrane. It carries out the reaction Cleavage of hydrophobic, N-terminal signal or leader sequences from secreted and periplasmic proteins.. Functionally, catalytic component of the signal peptidase complex (SPC) which catalyzes the cleavage of N-terminal signal sequences from nascent proteins as they are translocated into the lumen of the endoplasmic reticulum. Specifically cleaves N-terminal signal peptides that contain a hydrophobic alpha-helix (h-region) shorter than 18-20 amino acids. The protein is Signal peptidase complex catalytic subunit SEC11 (SEC11) of Scheffersomyces stipitis (strain ATCC 58785 / CBS 6054 / NBRC 10063 / NRRL Y-11545) (Yeast).